A 106-amino-acid polypeptide reads, in one-letter code: Small cardioactive peptide-related peptide (106 aa).

The signal sequence occupies residues 1–20; sequence MFCKHLSFVAITICFLLVLA. Positions 21-41 are cleaved as a propeptide — amino-terminal spacer peptide; that stretch reads KTENEIQQKNIKFDQRTWRNM. Gln-52 is modified (glutamine amide). A propeptide spans 55–106 (carboxy-terminal spacer peptide); that stretch reads SDNQPDYTCCGMPLTKYVGICPIGMECCPGLKKVLQKSGQRTIYSVCVADAY.

As to expression, expression is seen in the peripheral and central nervous systems in tissues such as the brain, the inferior buccal ganglion, the gastric ganglion, the olfactory lobe, the peduncle lobe and the optic lobe. Expression in the brain is distributed in the median inferior frontal lobe, the superior buccal lobe, the prebranchial lobe and the pedal lobe. Not expressed in the vasomotor lobe or the palliovisceral lobe that controls the cardiac system.

The protein localises to the secreted. In terms of biological role, evokes contractions in the radula protractor muscle, and may regulate feeding behavior and gut motility by controlling muscle contraction of the buccal mass. This Octopus vulgaris (Common octopus) protein is Small cardioactive peptide-related peptide.